We begin with the raw amino-acid sequence, 122 residues long: Large ribosomal subunit protein uL18 (122 aa).

This sequence belongs to the universal ribosomal protein uL18 family. Part of the 50S ribosomal subunit; part of the 5S rRNA/L5/L18/L25 subcomplex. Contacts the 5S and 23S rRNAs.

In terms of biological role, this is one of the proteins that bind and probably mediate the attachment of the 5S RNA into the large ribosomal subunit, where it forms part of the central protuberance. The sequence is that of Large ribosomal subunit protein uL18 from Desulfitobacterium hafniense (strain Y51).